A 542-amino-acid polypeptide reads, in one-letter code: Organic anion transporter 3 (542 aa).

Residues 1-9 (MTFSEILDR) are Cytoplasmic-facing. Serine 4 is modified (phosphoserine). The helical transmembrane segment at 10–30 (VGSMGHFQFLHVAILGLPILN) threads the bilayer. Residues 31–123 (MANHNLLQIF…LVCNSNKLKE (93 aa)) lie on the Extracellular side of the membrane. 2 N-linked (GlcNAc...) asparagine glycosylation sites follow: asparagine 86 and asparagine 102. The chain crosses the membrane as a helical span at residues 124–144 (MAQSIFMAGILIGGLVLGDLS). Residues 145-154 (DRFGRRPILT) are Cytoplasmic-facing. Residues 155–175 (CSYLLLAASGSGAAFSPTFPI) form a helical membrane-spanning segment. Residue tyrosine 176 is a topological domain, extracellular. A helical membrane pass occupies residues 177–197 (MVFRFLCGFGISGITLSTVIL). Residues 198–212 (NVEWVPTRMRAIMST) are Cytoplasmic-facing. Residues 213–233 (ALGYCYTFGQFILPGLAYAIP) traverse the membrane as a helical segment. The Extracellular portion of the chain corresponds to 234 to 236 (QWR). Residues 237–257 (WLQLTVSIPFFVFFLSSWWTP) traverse the membrane as a helical segment. Residues 258 to 327 (ESIRWLVLSG…FRIPMLRRMT (70 aa)) are Cytoplasmic-facing. The helical transmembrane segment at 328–348 (FCLSLAWFATGFAYYSLAMGV) threads the bilayer. Over 349–354 (EEFGVN) the chain is Extracellular. A helical transmembrane segment spans residues 355 to 375 (LYILQIIFGGVDVPAKFITIL). The Cytoplasmic segment spans residues 376–386 (SLSYLGRHTTQ). The helical transmembrane segment at 387-407 (AAALLLAGGAILALTFVPLDL) threads the bilayer. Residues 408 to 411 (QTVR) lie on the Extracellular side of the membrane. A helical membrane pass occupies residues 412-432 (TVLAVFGKGCLSSSFSCLFLY). Residues 433–471 (TSELYPTVIRQTGMGVSNLWTRVGSMVSPLVKITGEVQP) are Cytoplasmic-facing. Residues 472–492 (FIPNIIYGITALLGGSAALFL) traverse the membrane as a helical segment. The Extracellular segment spans residues 493–542 (PETLNQPLPETIEDLENWSLRAKKPKQEPEVEKASQRIPLQPHGPGLGSS). A disordered region spans residues 515 to 542 (KKPKQEPEVEKASQRIPLQPHGPGLGSS). A compositionally biased stretch (basic and acidic residues) spans 517–527 (PKQEPEVEKAS).

Belongs to the major facilitator (TC 2.A.1) superfamily. Organic cation transporter (TC 2.A.1.19) family. In terms of tissue distribution, strongly expressed in kidney. Weaker expression in brain and skeletal muscle. Expressed in adrenal glands.

It localises to the basolateral cell membrane. The enzyme catalyses estrone 3-sulfate(out) + glutarate(in) = estrone 3-sulfate(in) + glutarate(out). The catalysed reaction is estrone 3-sulfate(in) + 2-oxoglutarate(out) = estrone 3-sulfate(out) + 2-oxoglutarate(in). It carries out the reaction glutarate(in) + 2-oxoglutarate(out) = glutarate(out) + 2-oxoglutarate(in). It catalyses the reaction urate(in) + 2-oxoglutarate(out) = urate(out) + 2-oxoglutarate(in). The enzyme catalyses taurocholate(out) + glutarate(in) = taurocholate(in) + glutarate(out). The catalysed reaction is dehydroepiandrosterone 3-sulfate(out) + glutarate(in) = dehydroepiandrosterone 3-sulfate(in) + glutarate(out). It carries out the reaction prostaglandin F2alpha(out) + glutarate(in) = prostaglandin F2alpha(in) + glutarate(out). It catalyses the reaction prostaglandin F2alpha(out) + 2-oxoglutarate(in) = prostaglandin F2alpha(in) + 2-oxoglutarate(out). The enzyme catalyses (R)-carnitine(out) + 2-oxoglutarate(in) = (R)-carnitine(in) + 2-oxoglutarate(out). The catalysed reaction is glutarate(in) + (R)-carnitine(out) = glutarate(out) + (R)-carnitine(in). It carries out the reaction prostaglandin E2(out) + 2-oxoglutarate(in) = prostaglandin E2(in) + 2-oxoglutarate(out). It catalyses the reaction prostaglandin E2(out) + glutarate(in) = prostaglandin E2(in) + glutarate(out). The enzyme catalyses urate(in) + glutarate(out) = urate(out) + glutarate(in). The catalysed reaction is taurocholate(out) + 2-oxoglutarate(in) = taurocholate(in) + 2-oxoglutarate(out). It carries out the reaction dehydroepiandrosterone 3-sulfate(out) + 2-oxoglutarate(in) = dehydroepiandrosterone 3-sulfate(in) + 2-oxoglutarate(out). It catalyses the reaction kynurenate(out) + a dicarboxylate(in) = kynurenate(in) + a dicarboxylate(out). The enzyme catalyses (indol-3-yl)acetate(out) + a dicarboxylate(in) = (indol-3-yl)acetate(in) + a dicarboxylate(out). The catalysed reaction is indoxyl sulfate(out) + a dicarboxylate(in) = indoxyl sulfate(in) + a dicarboxylate(out). It carries out the reaction N-benzoylglycine(out) + a dicarboxylate(in) = N-benzoylglycine(in) + a dicarboxylate(out). It catalyses the reaction 3-carboxy-4-methyl-5-propyl-2-furanpropanoate(out) + a dicarboxylate(in) = 3-carboxy-4-methyl-5-propyl-2-furanpropanoate(in) + a dicarboxylate(out). The enzyme catalyses (6R)-L-erythro-5,6,7,8-tetrahydrobiopterin(out) + a dicarboxylate(in) = (6R)-L-erythro-5,6,7,8-tetrahydrobiopterin(in) + a dicarboxylate(out). The catalysed reaction is L-erythro-7,8-dihydrobiopterin(out) + a dicarboxylate(in) = L-erythro-7,8-dihydrobiopterin(in) + a dicarboxylate(out). It carries out the reaction L-sepiapterin(out) + a dicarboxylate(in) = L-sepiapterin(in) + a dicarboxylate(out). In terms of biological role, functions as an organic anion/dicarboxylate exchanger that couples organic anion uptake indirectly to the sodium gradient. Transports organic anions such as estrone 3-sulfate (E1S) and urate in exchange for dicarboxylates such as glutarate or ketoglutarate (2-oxoglutarate). Plays an important role in the excretion of endogenous and exogenous organic anions, especially from the kidney and the brain. E1S transport is pH- and chloride-dependent and may also involve E1S/cGMP exchange. Responsible for the transport of prostaglandin E2 (PGE2) and prostaglandin F2(alpha) (PGF2(alpha)) in the basolateral side of the renal tubule. Involved in the transport of neuroactive tryptophan metabolites kynurenate and xanthurenate. Functions as a biopterin transporters involved in the uptake and the secretion of coenzymes tetrahydrobiopterin (BH4), dihydrobiopterin (BH2) and sepiapterin to urine, thereby determining baseline levels of blood biopterins. May be involved in the basolateral transport of steviol, a metabolite of the popular sugar substitute stevioside. May participate in the detoxification/ renal excretion of drugs and xenobiotics, such as the histamine H(2)-receptor antagonists fexofenadine and cimetidine, the antibiotic benzylpenicillin (PCG), the anionic herbicide 2,4-dichloro-phenoxyacetate (2,4-D), the diagnostic agent p-aminohippurate (PAH), the antiviral acyclovir (ACV), and the mycotoxin ochratoxin (OTA), by transporting these exogenous organic anions across the cell membrane in exchange for dicarboxylates such as 2-oxoglutarate. Contributes to the renal uptake of potent uremic toxins (indoxyl sulfate (IS), indole acetate (IA), hippurate/N-benzoylglycine (HA) and 3-carboxy-4-methyl-5-propyl-2-furanpropionate (CMPF)), pravastatin, PCG, E1S and dehydroepiandrosterone sulfate (DHEAS), and is partly involved in the renal uptake of temocaprilat (an angiotensin-converting enzyme (ACE) inhibitor). May contribute to the release of cortisol in the adrenals. Involved in one of the detoxification systems on the choroid plexus (CP), removes substrates such as E1S or taurocholate (TC), PCG, 2,4-D and PAH, from the cerebrospinal fluid (CSF) to the blood for eventual excretion in urine and bile. Also contributes to the uptake of several other organic compounds such as the prostanoids prostaglandin E(2) and prostaglandin F(2-alpha), L-carnitine, and the therapeutic drugs allopurinol, 6-mercaptopurine (6-MP) and 5-fluorouracil (5-FU). Mediates the transport of PAH, PCG, and the statins pravastatin and pitavastatin, from the cerebrum into the blood circulation across the blood-brain barrier (BBB). In summary, plays a role in the efflux of drugs and xenobiotics, helping reduce their undesired toxicological effects on the body. In Homo sapiens (Human), this protein is Organic anion transporter 3.